The sequence spans 215 residues: Adenylate kinase (215 aa).

10–15 (GAGKGT) is an ATP binding site. The NMP stretch occupies residues 30–59 (STGDMLRSAIKSGSELGKKAKQVMDAGQLV). AMP-binding positions include threonine 31, arginine 36, 57–59 (QLV), 85–88 (GFPR), and glutamine 92. The tract at residues 122 to 159 (GRRVHPGSGRVYHVEHNPPKVEGKDDETGEDLVVRPDD) is LID. Residues arginine 123 and 132–133 (VY) each bind ATP. Residues 128–151 (GSGRVYHVEHNPPKVEGKDDETGE) are disordered. Residues 133 to 144 (YHVEHNPPKVEG) are compositionally biased toward basic and acidic residues. AMP is bound by residues arginine 156 and arginine 167. The segment at 195-215 (KIDGTQPVERVSEQLGDLLRK) is disordered. Glutamine 200 lines the ATP pocket.

It belongs to the adenylate kinase family. In terms of assembly, monomer.

The protein resides in the cytoplasm. It catalyses the reaction AMP + ATP = 2 ADP. It functions in the pathway purine metabolism; AMP biosynthesis via salvage pathway; AMP from ADP: step 1/1. In terms of biological role, catalyzes the reversible transfer of the terminal phosphate group between ATP and AMP. Plays an important role in cellular energy homeostasis and in adenine nucleotide metabolism. The sequence is that of Adenylate kinase from Idiomarina loihiensis (strain ATCC BAA-735 / DSM 15497 / L2-TR).